Here is a 141-residue protein sequence, read N- to C-terminus: D-aminoacyl-tRNA deacylase (141 aa).

The short motif at 133–134 (GP) is the Gly-cisPro motif, important for rejection of L-amino acids element.

This sequence belongs to the DTD family. As to quaternary structure, homodimer.

It is found in the cytoplasm. The enzyme catalyses glycyl-tRNA(Ala) + H2O = tRNA(Ala) + glycine + H(+). It catalyses the reaction a D-aminoacyl-tRNA + H2O = a tRNA + a D-alpha-amino acid + H(+). In terms of biological role, an aminoacyl-tRNA editing enzyme that deacylates mischarged D-aminoacyl-tRNAs. Also deacylates mischarged glycyl-tRNA(Ala), protecting cells against glycine mischarging by AlaRS. Acts via tRNA-based rather than protein-based catalysis; rejects L-amino acids rather than detecting D-amino acids in the active site. By recycling D-aminoacyl-tRNA to D-amino acids and free tRNA molecules, this enzyme counteracts the toxicity associated with the formation of D-aminoacyl-tRNA entities in vivo and helps enforce protein L-homochirality. This is D-aminoacyl-tRNA deacylase from Beutenbergia cavernae (strain ATCC BAA-8 / DSM 12333 / CCUG 43141 / JCM 11478 / NBRC 16432 / NCIMB 13614 / HKI 0122).